Consider the following 367-residue polypeptide: Splicing factor U2AF-associated protein 2 (367 aa).

Residues 36–104 (YDPNSLKMNK…SKSENSEASP (69 aa)) form a disordered region. Residues 61-78 (TEGKESSNGEDRHTKRLY) are compositionally biased toward basic and acidic residues. RRM domains are found at residues 112 to 193 (VYIQ…KMRV) and 268 to 329 (LLID…VVEA).

The protein belongs to the HTATSF1 family. As to quaternary structure, interacts with the U2AF large and U2AF small subunits.

Its function is as follows. Has a role in pre-mRNA splicing. The polypeptide is Splicing factor U2AF-associated protein 2 (uap2) (Schizosaccharomyces pombe (strain 972 / ATCC 24843) (Fission yeast)).